An 87-amino-acid chain; its full sequence is Small ribosomal subunit protein uS17 (87 aa).

It belongs to the universal ribosomal protein uS17 family. As to quaternary structure, part of the 30S ribosomal subunit.

In terms of biological role, one of the primary rRNA binding proteins, it binds specifically to the 5'-end of 16S ribosomal RNA. This chain is Small ribosomal subunit protein uS17, found in Alcanivorax borkumensis (strain ATCC 700651 / DSM 11573 / NCIMB 13689 / SK2).